Consider the following 368-residue polypeptide: Aminomethyltransferase (368 aa).

It belongs to the GcvT family. As to quaternary structure, the glycine cleavage system is composed of four proteins: P, T, L and H.

The catalysed reaction is N(6)-[(R)-S(8)-aminomethyldihydrolipoyl]-L-lysyl-[protein] + (6S)-5,6,7,8-tetrahydrofolate = N(6)-[(R)-dihydrolipoyl]-L-lysyl-[protein] + (6R)-5,10-methylene-5,6,7,8-tetrahydrofolate + NH4(+). Functionally, the glycine cleavage system catalyzes the degradation of glycine. This Thermoanaerobacter sp. (strain X514) protein is Aminomethyltransferase.